A 391-amino-acid polypeptide reads, in one-letter code: Pyruvate dehydrogenase E1 component subunit beta-3, chloroplastic (391 aa).

A chloroplast-targeting transit peptide spans 1–35 (MATAAAASLQYALHGAASASAKPRSAAPGRSVRVV). Residue Glu127 participates in thiamine diphosphate binding. The K(+) site is built by Ile180, Ala228, Ile229, and Asn233.

Tetramer of 2 alpha and 2 beta subunits. The cofactor is thiamine diphosphate.

Its subcellular location is the plastid. The protein localises to the chloroplast. It catalyses the reaction N(6)-[(R)-lipoyl]-L-lysyl-[protein] + pyruvate + H(+) = N(6)-[(R)-S(8)-acetyldihydrolipoyl]-L-lysyl-[protein] + CO2. The pyruvate dehydrogenase complex catalyzes the overall conversion of pyruvate to acetyl-CoA and CO(2). It contains multiple copies of three enzymatic components: pyruvate dehydrogenase (E1), dihydrolipoamide acetyltransferase (E2) and lipoamide dehydrogenase (E3). The sequence is that of Pyruvate dehydrogenase E1 component subunit beta-3, chloroplastic from Oryza sativa subsp. japonica (Rice).